The primary structure comprises 789 residues: Zinc finger FYVE domain-containing protein 1 (789 aa).

The interval 416-788 (MAHSSFFPDE…LSVMTGKGPL (373 aa)) is required for localization in the lipid droplets. 2 consecutive FYVE-type zinc fingers follow at residues 598–659 (NSQI…EARN) and 715–775 (DHEI…KKPA). Positions 604, 607, 620, 623, 628, 631, 651, 654, 721, 724, 737, 740, 745, 748, 767, and 770 each coordinate Zn(2+).

Interacts with RAB18 (in GTP-bound form). Interacts with BSCL2 in a RAB18-dependent manner. Interacts with ZW10.

Its subcellular location is the golgi apparatus. The protein localises to the golgi stack. It localises to the endoplasmic reticulum. The protein resides in the preautophagosomal structure. It is found in the lipid droplet. Its subcellular location is the mitochondrion. Its function is as follows. Plays a role in the formation of lipid droplets (LDs) which are storage organelles at the center of lipid and energy homeostasis. Regulates the morphology, size and distribution of LDs. Mediates the formation of endoplasmic reticulum-lipid droplets (ER-LD) contact sites by forming a complex with RAB18 and ZW10. Binds to phosphatidylinositol 3-phosphate (PtdIns3P) through FYVE-type zinc finger. This chain is Zinc finger FYVE domain-containing protein 1 (ZFYVE1), found in Pongo abelii (Sumatran orangutan).